Here is a 466-residue protein sequence, read N- to C-terminus: Methylenetetrahydrofolate--tRNA-(uracil-5-)-methyltransferase TrmFO (466 aa).

14–19 (GGGLAG) contributes to the FAD binding site.

The protein belongs to the MnmG family. TrmFO subfamily. FAD serves as cofactor.

The protein localises to the cytoplasm. The catalysed reaction is uridine(54) in tRNA + (6R)-5,10-methylene-5,6,7,8-tetrahydrofolate + NADH + H(+) = 5-methyluridine(54) in tRNA + (6S)-5,6,7,8-tetrahydrofolate + NAD(+). The enzyme catalyses uridine(54) in tRNA + (6R)-5,10-methylene-5,6,7,8-tetrahydrofolate + NADPH + H(+) = 5-methyluridine(54) in tRNA + (6S)-5,6,7,8-tetrahydrofolate + NADP(+). Functionally, catalyzes the folate-dependent formation of 5-methyl-uridine at position 54 (M-5-U54) in all tRNAs. This chain is Methylenetetrahydrofolate--tRNA-(uracil-5-)-methyltransferase TrmFO, found in Brucella suis (strain ATCC 23445 / NCTC 10510).